Consider the following 302-residue polypeptide: Probable WRKY transcription factor 40 (302 aa).

The WRKY DNA-binding region spans 140-206; it reads DTTLVVKDGY…YEGEHNHPMP (67 aa).

It belongs to the WRKY group III family.

It is found in the nucleus. Functionally, transcription factor. Interacts specifically with the W box (5'-(T)TGAC[CT]-3'), a frequently occurring elicitor-responsive cis-acting element. The polypeptide is Probable WRKY transcription factor 40 (Arabidopsis thaliana (Mouse-ear cress)).